Reading from the N-terminus, the 302-residue chain is UDP-3-O-acyl-N-acetylglucosamine deacetylase (302 aa).

Zn(2+)-binding residues include His78, His237, and Asp241. The active-site Proton donor is His264.

Belongs to the LpxC family. Zn(2+) serves as cofactor.

The catalysed reaction is a UDP-3-O-[(3R)-3-hydroxyacyl]-N-acetyl-alpha-D-glucosamine + H2O = a UDP-3-O-[(3R)-3-hydroxyacyl]-alpha-D-glucosamine + acetate. Its pathway is glycolipid biosynthesis; lipid IV(A) biosynthesis; lipid IV(A) from (3R)-3-hydroxytetradecanoyl-[acyl-carrier-protein] and UDP-N-acetyl-alpha-D-glucosamine: step 2/6. Functionally, catalyzes the hydrolysis of UDP-3-O-myristoyl-N-acetylglucosamine to form UDP-3-O-myristoylglucosamine and acetate, the committed step in lipid A biosynthesis. The polypeptide is UDP-3-O-acyl-N-acetylglucosamine deacetylase (Hahella chejuensis (strain KCTC 2396)).